A 120-amino-acid chain; its full sequence is Chaperonin GroEL (120 aa).

23 to 27 lines the ATP pocket; the sequence is DGTTT.

Belongs to the chaperonin (HSP60) family. Forms a cylinder of 14 subunits composed of two heptameric rings stacked back-to-back. Interacts with the co-chaperonin GroES.

The protein localises to the cytoplasm. It carries out the reaction ATP + H2O + a folded polypeptide = ADP + phosphate + an unfolded polypeptide.. Its function is as follows. Together with its co-chaperonin GroES, plays an essential role in assisting protein folding. The GroEL-GroES system forms a nano-cage that allows encapsulation of the non-native substrate proteins and provides a physical environment optimized to promote and accelerate protein folding. The polypeptide is Chaperonin GroEL (Mycobacterium gordonae).